The sequence spans 119 residues: Large ribosomal subunit protein bL19 (119 aa).

It belongs to the bacterial ribosomal protein bL19 family.

In terms of biological role, this protein is located at the 30S-50S ribosomal subunit interface and may play a role in the structure and function of the aminoacyl-tRNA binding site. The chain is Large ribosomal subunit protein bL19 from Leuconostoc mesenteroides subsp. mesenteroides (strain ATCC 8293 / DSM 20343 / BCRC 11652 / CCM 1803 / JCM 6124 / NCDO 523 / NBRC 100496 / NCIMB 8023 / NCTC 12954 / NRRL B-1118 / 37Y).